Reading from the N-terminus, the 356-residue chain is Non-functional pseudokinase ZRK15 (356 aa).

In terms of domain architecture, Protein kinase spans 62-356 (NRVSELFDEI…SSSSCGETSL (295 aa)). ATP is bound by residues 68-76 (FDEIPYDWY) and Lys-94.

It belongs to the protein kinase superfamily. Ser/Thr protein kinase family. ZRK subfamily. As to quaternary structure, interacts with RPP13L4/ZAR1.

The protein is Non-functional pseudokinase ZRK15 of Arabidopsis thaliana (Mouse-ear cress).